Here is a 352-residue protein sequence, read N- to C-terminus: Protein SIS1 (352 aa).

In terms of domain architecture, J spans 4–70 (ETKLYDLLGV…REIYDQYGLE (67 aa)). A Phosphoserine modification is found at serine 275. The disordered stretch occupies residues 300–325 (VQPVQPSQTSTYPGQGMPTPKNPSQR). Residues 301–312 (QPVQPSQTSTYP) show a composition bias toward polar residues.

As to quaternary structure, interacts with polyadenylate-binding protein PAB1.

Its subcellular location is the cytoplasm. The protein resides in the nucleus. Its function is as follows. Required for nuclear migration during mitosis. It is required for the normal initiation of translation. Might mediate the dissociation of a specific protein complex of the translation machinery. Essential for viability. The protein is Protein SIS1 (SIS1) of Saccharomyces cerevisiae (strain ATCC 204508 / S288c) (Baker's yeast).